Here is a 1338-residue protein sequence, read N- to C-terminus: Fanconi anemia group I protein (1338 aa).

Residue Lys525 forms a Glycyl lysine isopeptide (Lys-Gly) (interchain with G-Cter in ubiquitin) linkage. Phosphoserine occurs at positions 558 and 561. Thr567 is modified (phosphothreonine).

Belongs to the Fanconi anemia group I protein family. Homodimer. Part of a FANCI-FANCD2 heterodimeric complex that binds and scans dsDNA for DNA damage. Interacts with FANCL. Interacts with MTMR15/FAN1. Interacts with POLN. Interacts with UBL5; the interaction promotes FANCI homodimerization. In terms of processing, monoubiquitinated by FANCL during S phase and upon genotoxic stress. Deubiquitinated by USP1 as cells enter G2/M, or once DNA repair is completed. Monoubiquitination requires the FANCA-FANCB-FANCC-FANCE-FANCF-FANCG-FANCM complex. Ubiquitination is required for binding to chromatin, DNA repair, and normal cell cycle progression. Monoubiquitination is stimulated by DNA-binding. Post-translationally, phosphorylated in response to DNA damage by ATM and/or ATR. Phosphorylation of FANCI promotes ubiquitination of FANCD2, which prevents DNA release from the FANCI-FANCD2 complex.

Plays an essential role in the repair of DNA double-strand breaks by homologous recombination and in the repair of interstrand DNA cross-links (ICLs) by promoting FANCD2 monoubiquitination by FANCL and participating in recruitment to DNA repair sites. The FANCI-FANCD2 complex binds and scans double-stranded DNA (dsDNA) for DNA damage; this complex stalls at DNA junctions between double-stranded DNA and single-stranded DNA. Participates in S phase and G2 phase checkpoint activation upon DNA damage. This is Fanconi anemia group I protein from Gallus gallus (Chicken).